Reading from the N-terminus, the 194-residue chain is UPF0301 protein FTA_1286 (194 aa).

It belongs to the UPF0301 (AlgH) family.

The polypeptide is UPF0301 protein FTA_1286 (Francisella tularensis subsp. holarctica (strain FTNF002-00 / FTA)).